A 271-amino-acid polypeptide reads, in one-letter code: Probable septum site-determining protein MinC (271 aa).

A disordered region spans residues 106–125; it reads RRAPSPKAADDAPAQPEEPR. Low complexity predominate over residues 110 to 119; that stretch reads SPKAADDAPA.

This sequence belongs to the MinC family. As to quaternary structure, interacts with MinD and FtsZ.

Its function is as follows. Cell division inhibitor that blocks the formation of polar Z ring septums. Rapidly oscillates between the poles of the cell to destabilize FtsZ filaments that have formed before they mature into polar Z rings. Prevents FtsZ polymerization. The chain is Probable septum site-determining protein MinC from Burkholderia thailandensis (strain ATCC 700388 / DSM 13276 / CCUG 48851 / CIP 106301 / E264).